A 142-amino-acid chain; its full sequence is Hemoglobin subunit alpha (142 aa).

A Globin domain is found at 2 to 142; that stretch reads VLSAADKGNV…VSTVLTSKYR (141 aa). At serine 4 the chain carries Phosphoserine. 2 positions are modified to N6-succinyllysine: lysine 8 and lysine 12. Lysine 17 carries the N6-acetyllysine; alternate modification. Lysine 17 bears the N6-succinyllysine; alternate mark. Tyrosine 25 is modified (phosphotyrosine). Residue serine 36 is modified to Phosphoserine. Lysine 41 carries the post-translational modification N6-succinyllysine. At serine 50 the chain carries Phosphoserine. Residue histidine 59 participates in O2 binding. Histidine 88 contacts heme b. Serine 103 is modified (phosphoserine). A Phosphothreonine modification is found at threonine 109. Phosphoserine is present on serine 125. 2 positions are modified to phosphothreonine: threonine 135 and threonine 138. Position 139 is a phosphoserine (serine 139).

This sequence belongs to the globin family. Heterotetramer of two alpha chains and two beta chains. In terms of tissue distribution, red blood cells.

Functionally, involved in oxygen transport from the lung to the various peripheral tissues. In terms of biological role, hemopressin acts as an antagonist peptide of the cannabinoid receptor CNR1. Hemopressin-binding efficiently blocks cannabinoid receptor CNR1 and subsequent signaling. The polypeptide is Hemoglobin subunit alpha (HBA) (Bos taurus (Bovine)).